We begin with the raw amino-acid sequence, 334 residues long: Ornithine carbamoyltransferase (334 aa).

Residues 57 to 60 (STRT), Gln84, Arg108, and 135 to 138 (HPTQ) each bind carbamoyl phosphate. Residues Asn168, Asp233, and 237 to 238 (SM) each bind L-ornithine. Carbamoyl phosphate contacts are provided by residues 275 to 276 (CL) and Arg320.

Belongs to the aspartate/ornithine carbamoyltransferase superfamily. OTCase family.

It localises to the cytoplasm. The catalysed reaction is carbamoyl phosphate + L-ornithine = L-citrulline + phosphate + H(+). It participates in amino-acid biosynthesis; L-arginine biosynthesis; L-arginine from L-ornithine and carbamoyl phosphate: step 1/3. Functionally, reversibly catalyzes the transfer of the carbamoyl group from carbamoyl phosphate (CP) to the N(epsilon) atom of ornithine (ORN) to produce L-citrulline. The sequence is that of Ornithine carbamoyltransferase from Thermobifida fusca (strain YX).